A 115-amino-acid polypeptide reads, in one-letter code: U17-barytoxin-Tl1c (115 aa).

Residues 1 to 20 (MKTIIVFLSLLVLATKFGDA) form the signal peptide. Residues 21-74 (KEGVNQKQKKEVTQNEFREEYLNEMAAMSLVQQLEAIERALFENEAGRNSRQKR) constitute a propeptide that is removed on maturation. Disulfide bonds link Cys75–Cys89, Cys82–Cys94, and Cys88–Cys109.

It belongs to the neurotoxin 14 (magi-1) family. 03 (ICK-30-40) subfamily. In terms of tissue distribution, expressed by the venom gland.

It is found in the secreted. In terms of biological role, ion channel inhibitor. This Trittame loki (Brush-footed trapdoor spider) protein is U17-barytoxin-Tl1c.